A 103-amino-acid chain; its full sequence is V-type sodium ATPase subunit G (103 aa).

It belongs to the V-ATPase F subunit family.

Involved in ATP-driven sodium extrusion. The chain is V-type sodium ATPase subunit G (ntpG) from Enterococcus hirae (strain ATCC 9790 / DSM 20160 / JCM 8729 / LMG 6399 / NBRC 3181 / NCIMB 6459 / NCDO 1258 / NCTC 12367 / WDCM 00089 / R).